We begin with the raw amino-acid sequence, 428 residues long: Flap endonuclease 1-B (428 aa).

The tract at residues 1–132 (MGIKGLTKVL…KELAKRSLKR (132 aa)) is N-domain. Mg(2+) is bound at residue Asp-34. Residue Arg-98 participates in DNA binding. The Mg(2+) site is built by Asp-114, Glu-186, Glu-188, Asp-207, and Asp-209. Residues 150–281 (AVEKFSKRTV…QRALKLIRQH (132 aa)) form an I-domain region. DNA is bound at residue Glu-186. DNA-binding residues include Gly-259 and Asp-261. Asp-261 provides a ligand contact to Mg(2+).

It belongs to the XPG/RAD2 endonuclease family. FEN1 subfamily. As to quaternary structure, interacts with PCNA. Three molecules of FEN1 bind to one PCNA trimer with each molecule binding to one PCNA monomer. PCNA stimulates the nuclease activity without altering cleavage specificity. The cofactor is Mg(2+). Phosphorylated. Phosphorylation upon DNA damage induces relocalization to the nuclear plasma.

Its subcellular location is the nucleus. It localises to the nucleolus. The protein resides in the nucleoplasm. It is found in the mitochondrion. Functionally, structure-specific nuclease with 5'-flap endonuclease and 5'-3' exonuclease activities involved in DNA replication and repair. During DNA replication, cleaves the 5'-overhanging flap structure that is generated by displacement synthesis when DNA polymerase encounters the 5'-end of a downstream Okazaki fragment. It enters the flap from the 5'-end and then tracks to cleave the flap base, leaving a nick for ligation. Also involved in the long patch base excision repair (LP-BER) pathway, by cleaving within the apurinic/apyrimidinic (AP) site-terminated flap. Acts as a genome stabilization factor that prevents flaps from equilibrating into structures that lead to duplications and deletions. Also possesses 5'-3' exonuclease activity on nicked or gapped double-stranded DNA, and exhibits RNase H activity. Also involved in replication and repair of rDNA and in repairing mitochondrial DNA. This chain is Flap endonuclease 1-B, found in Sorghum bicolor (Sorghum).